The primary structure comprises 288 residues: Disulfide-bond oxidoreductase YghU (288 aa).

Glutathione is bound by residues asparagine 26, 52 to 54 (TPN), glutamine 87, isoleucine 101, 117 to 118 (ES), glutamine 151, and arginine 178. The 88-residue stretch at 46–133 (QLYSLGTPNG…YLAEKFGYFL (88 aa)) folds into the GST N-terminal domain. The GST C-terminal domain maps to 139–265 (KRTETMNWLF…RIVNRTNGPL (127 aa)). Residues 260 to 288 (RTNGPLNEQLHERHDASDFETNTEDKRQG) form a disordered region. Over residues 268–288 (QLHERHDASDFETNTEDKRQG) the composition is skewed to basic and acidic residues.

This sequence belongs to the GST superfamily. Nu-class GSH transferase family. As to quaternary structure, homodimer.

Its function is as follows. Exhibits a robust glutathione (GSH)-dependent disulfide-bond reductase activity toward the model substrate, 2-hydroxyethyl disulfide; the actual physiological substrates are not known. Also displays a modest GSH-dependent peroxidase activity toward several organic hydroperoxides, such as cumene hydroperoxide and linoleic acid 13(S)-hydroperoxide, but does not reduce H(2)O(2) or tert-butyl hydroperoxide at appreciable rates. Exhibits little or no GSH transferase activity with most typical electrophilic substrates, and has no detectable transferase activity toward 1-chloro-2,4-dinitrobenzene (CDNB) with glutathionylspermidine (GspSH) as the nucleophilic substrate. This chain is Disulfide-bond oxidoreductase YghU (yghU), found in Escherichia coli (strain K12).